Consider the following 500-residue polypeptide: Cytochrome P450 11B2, mitochondrial (500 aa).

Residues 1–24 constitute a mitochondrion transit peptide; that stretch reads MALRAKADVWLARPWQCLPRTRAL. Phenylalanine 381 contributes to the 21-hydroxyprogesterone binding site. Residue cysteine 447 participates in heme binding.

Belongs to the cytochrome P450 family. Requires heme as cofactor. As to expression, adrenal gland.

The protein localises to the mitochondrion inner membrane. The enzyme catalyses a steroid + 2 reduced [adrenodoxin] + O2 + 2 H(+) = an 11beta-hydroxysteroid + 2 oxidized [adrenodoxin] + H2O. It catalyses the reaction 21-hydroxyprogesterone + 2 reduced [adrenodoxin] + O2 + 2 H(+) = corticosterone + 2 oxidized [adrenodoxin] + H2O. The catalysed reaction is corticosterone + 2 reduced [adrenodoxin] + O2 + 2 H(+) = 18-hydroxycorticosterone + 2 oxidized [adrenodoxin] + H2O. It carries out the reaction 18-hydroxycorticosterone + 2 reduced [adrenodoxin] + O2 + 2 H(+) = aldosterone + 2 oxidized [adrenodoxin] + 2 H2O. The enzyme catalyses 11-deoxycortisol + 2 reduced [adrenodoxin] + O2 + 2 H(+) = cortisol + 2 oxidized [adrenodoxin] + H2O. It catalyses the reaction 21-hydroxyprogesterone + 2 reduced [adrenodoxin] + O2 + 2 H(+) = 18-hydroxy-11-deoxycorticosterone + 2 oxidized [adrenodoxin] + H2O. The catalysed reaction is cortisol + 2 reduced [adrenodoxin] + O2 + 2 H(+) = 18-hydroxycortisol + 2 oxidized [adrenodoxin] + H2O. It carries out the reaction 18-hydroxycortisol + 2 reduced [adrenodoxin] + O2 + 2 H(+) = 18-oxocortisol + 2 oxidized [adrenodoxin] + 2 H2O. The protein operates within steroid biosynthesis. In terms of biological role, a cytochrome P450 monooxygenase that catalyzes the biosynthesis of aldosterone, the main mineralocorticoid in the human body responsible for salt and water homeostasis, thus involved in blood pressure regulation, arterial hypertension, and the development of heart failure. Catalyzes three sequential oxidative reactions of 11-deoxycorticosterone (21-hydroxyprogesterone), namely 11-beta hydroxylation, followed by two successive oxidations at C18 yielding 18-hydroxy and then 18-oxo intermediates (that would not leave the enzyme active site during the consecutive hydroxylation reactions), ending with the formation of aldosterone. Can also produce 18-hydroxycortisol and 18-oxocortisol, derived from successive oxidations of cortisol at C18, normally found at very low levels, but significantly increased in primary aldosteronism, the most common form of secondary hypertension. Mechanistically, uses molecular oxygen inserting one oxygen atom into a substrate and reducing the second into a water molecule. Two electrons are provided by NADPH via a two-protein mitochondrial transfer system comprising flavoprotein FDXR (adrenodoxin/ferredoxin reductase) and nonheme iron-sulfur protein FDX1 or FDX2 (adrenodoxin/ferredoxin). Could also be involved in the androgen metabolic pathway. This is Cytochrome P450 11B2, mitochondrial (CYP11B2) from Mesocricetus auratus (Golden hamster).